The following is a 404-amino-acid chain: Cysteine desulfurase IscS (404 aa).

Pyridoxal 5'-phosphate contacts are provided by residues 75–76 (AT), N155, Q183, and 203–205 (SGH). At K206 the chain carries N6-(pyridoxal phosphate)lysine. T243 is a pyridoxal 5'-phosphate binding site. The active-site Cysteine persulfide intermediate is C328. Residue C328 participates in [2Fe-2S] cluster binding.

The protein belongs to the class-V pyridoxal-phosphate-dependent aminotransferase family. NifS/IscS subfamily. As to quaternary structure, homodimer. Forms a heterotetramer with IscU, interacts with other sulfur acceptors. Requires pyridoxal 5'-phosphate as cofactor.

Its subcellular location is the cytoplasm. The catalysed reaction is (sulfur carrier)-H + L-cysteine = (sulfur carrier)-SH + L-alanine. Its pathway is cofactor biosynthesis; iron-sulfur cluster biosynthesis. Master enzyme that delivers sulfur to a number of partners involved in Fe-S cluster assembly, tRNA modification or cofactor biosynthesis. Catalyzes the removal of elemental sulfur and selenium atoms from cysteine and selenocysteine to produce alanine. Functions as a sulfur delivery protein for Fe-S cluster synthesis onto IscU, an Fe-S scaffold assembly protein, as well as other S acceptor proteins. Also functions as a selenium delivery protein in the pathway for the biosynthesis of selenophosphate. The chain is Cysteine desulfurase IscS from Salmonella schwarzengrund (strain CVM19633).